A 458-amino-acid polypeptide reads, in one-letter code: Monomethylamine methyltransferase MtmB2 (458 aa).

Position 202 (O202) is a non-standard amino acid, pyrrolysine.

This sequence belongs to the monomethylamine methyltransferase family. As to quaternary structure, can form a complex with MtmC.

The catalysed reaction is Co(I)-[methylamine-specific corrinoid protein] + methylamine + H(+) = methyl-Co(III)-[methylamine-specific corrinoid protein] + NH4(+). The protein operates within one-carbon metabolism; methanogenesis from methylamine. Its function is as follows. Catalyzes the transfer of the methyl group from monomethylamine to the corrinoid cofactor of MtmC. The protein is Monomethylamine methyltransferase MtmB2 (mtmB2) of Methanosarcina acetivorans (strain ATCC 35395 / DSM 2834 / JCM 12185 / C2A).